A 258-amino-acid chain; its full sequence is MVTMRDLLECGVHFGHQTRRWNPKMKKFIFGERKGIYIIDLQKTIRYFRYTYNIVRDAAAEGKTVLFVGTKKQAGVAIKEYAEKCGMPYVNHRWLGGMMTNFGTIKQSIRKLEVIEAMEEDGSINLLTKKEALMLRRKKEKLLATLGGIRNMKSLPDMVFVIDTVKEKIAVAEANKLRMPVVAPIDTNCDPDIVDFPIPGNDDAIRSVQLFCQEMAEAINEGKALRDQDEAEQVEPVSQEEKDEVVAEAMSEADFEEQ.

Residues 222-258 are disordered; that stretch reads GKALRDQDEAEQVEPVSQEEKDEVVAEAMSEADFEEQ.

The protein belongs to the universal ribosomal protein uS2 family.

This chain is Small ribosomal subunit protein uS2, found in Campylobacter fetus subsp. fetus (strain 82-40).